A 617-amino-acid polypeptide reads, in one-letter code: LEAF RUST 10 DISEASE-RESISTANCE LOCUS RECEPTOR-LIKE PROTEIN KINASE-like 2.4 (617 aa).

A signal peptide spans 1 to 26 (MYYLPSSCLVLFLFFSLFYHLPCASS). Over 27 to 243 (KQTLGWCESQ…LPTRLSSEAK (217 aa)) the chain is Extracellular. Residues asparagine 41, asparagine 69, asparagine 86, asparagine 112, and asparagine 184 are each glycosylated (N-linked (GlcNAc...) asparagine). A helical membrane pass occupies residues 244 to 264 (IATIAGVSLLPFLVLTLVVHI). Topologically, residues 265 to 617 (IRKQKTSNDK…SEENSISSEI (353 aa)) are cytoplasmic. Positions 307 to 594 (NSFAEVVGRG…ALEVPPRPVL (288 aa)) constitute a Protein kinase domain. Residues 313-321 (VGRGGFGIV) and lysine 335 contribute to the ATP site. Tyrosine 380 bears the Phosphotyrosine mark. Residue aspartate 431 is the Proton acceptor of the active site. Residues threonine 468 and threonine 471 each carry the phosphothreonine modification.

This sequence belongs to the protein kinase superfamily. Ser/Thr protein kinase family.

Its subcellular location is the membrane. It catalyses the reaction L-seryl-[protein] + ATP = O-phospho-L-seryl-[protein] + ADP + H(+). The enzyme catalyses L-threonyl-[protein] + ATP = O-phospho-L-threonyl-[protein] + ADP + H(+). This chain is LEAF RUST 10 DISEASE-RESISTANCE LOCUS RECEPTOR-LIKE PROTEIN KINASE-like 2.4, found in Arabidopsis thaliana (Mouse-ear cress).